The sequence spans 456 residues: NADH oxidase (456 aa).

An FAD-binding site is contributed by Asn-10. Catalysis depends on His-11, which acts as the Proton acceptor. Ala-12, Asp-34, Gln-35, Cys-44, Val-81, Ala-110, Ser-113, Lys-143, and Tyr-170 together coordinate FAD. Cys-44 acts as the Redox-active in catalysis. Cys-44 carries the post-translational modification Cysteine sulfinic acid (-SO2H). The NAD(+) site is built by Ile-171, Asp-190, Tyr-199, and Gly-254. Asp-292 provides a ligand contact to FAD. Ala-308 is a binding site for NAD(+). Residues Leu-309, Ala-310, and Ser-311 each contribute to the FAD site. Gly-339 lines the NAD(+) pocket. Residue Phe-436 coordinates FAD.

FAD serves as cofactor.

The enzyme catalyses 2 NADH + O2 + 2 H(+) = 2 NAD(+) + 2 H2O. In terms of biological role, catalyzes the four-electron reduction of molecular oxygen to water. The polypeptide is NADH oxidase (Streptococcus pyogenes serotype M6 (strain ATCC BAA-946 / MGAS10394)).